The chain runs to 382 residues: D-galactonate dehydratase (382 aa).

Asp-183 provides a ligand contact to Mg(2+). His-185 serves as the catalytic Proton donor. The Mg(2+) site is built by Glu-209 and Glu-235. The active-site Proton acceptor is His-285.

This sequence belongs to the mandelate racemase/muconate lactonizing enzyme family. GalD subfamily. Mg(2+) serves as cofactor.

It catalyses the reaction D-galactonate = 2-dehydro-3-deoxy-D-galactonate + H2O. The protein operates within carbohydrate acid metabolism; D-galactonate degradation; D-glyceraldehyde 3-phosphate and pyruvate from D-galactonate: step 1/3. Its function is as follows. Catalyzes the dehydration of D-galactonate to 2-keto-3-deoxy-D-galactonate. In Escherichia coli (strain 55989 / EAEC), this protein is D-galactonate dehydratase.